A 216-amino-acid polypeptide reads, in one-letter code: Pentapeptide repeat protein VPA0095 (216 aa).

Belongs to the pentapeptide repeat protein family.

Has no effect when overexpressed in E.coli. When Cys-115 is mutated to Tyr and overexpressed it increases (fluoro)quinolone resistance in E.coli up to 16-fold for ciprofloxacin, levofloxacin and nalidixic acid. The sequence is that of Pentapeptide repeat protein VPA0095 from Vibrio parahaemolyticus serotype O3:K6 (strain RIMD 2210633).